We begin with the raw amino-acid sequence, 442 residues long: Syndecan-3 (442 aa).

Disordered stretches follow at residues M1–A25 and R55–F85. A signal peptide spans M1–G44. At A45–V387 the chain is on the extracellular side. A compositionally biased stretch (acidic residues) spans G61–D75. S78, S80, S82, and S89 each carry an O-linked (Xyl...) (glycosaminoglycan) serine glycan. T107 carries O-linked (GalNAc) threonine; by GALNT13 glycosylation. 5 disordered regions span residues E151 to P175, A180 to A199, A225 to A244, T252 to P327, and A339 to A372. Low complexity predominate over residues A157–P175. O-linked (GalNAc) serine; by GALNT13 glycosylation is present at S161. Residues T162, T163, T170, and T172 are each glycosylated (O-linked (GalNAc) threonine; by GALNT13). A compositionally biased stretch (low complexity) spans T276 to T287. Over residues V289–Q303 the composition is skewed to polar residues. Residues S315 and S367 are each glycosylated (O-linked (Xyl...) (glycosaminoglycan) serine). The helical transmembrane segment at A388–I408 threads the bilayer. Residues Y409, Y419, Y431, and Y441 each carry the phosphotyrosine modification. Residues Y409 to A442 are Cytoplasmic-facing. A disordered region spans residues Y419 to A442. A compositionally biased stretch (basic and acidic residues) spans K433–A442.

The protein belongs to the syndecan proteoglycan family. In terms of assembly, interacts with TIAM1. Interacts (via heparan sulfate chains) with PTN; this interaction mediates the neurite outgrowth-promoting signal from PTN to the cytoskeleton of growing neurites; this interaction mediates osteoblast recruitment. Interacts with MDK; this interaction induces SDC3 clustering; this interaction induces neuronal cell adhesion and neurite outgrowth. Post-translationally, O-glycosylated within the Thr/Ser-rich region which could interact with lectin domains on other molecules. High levels in neonatal brain, heart, and Schwann cells, barely detectable in neonatal or adult liver, or adult brain.

The protein localises to the cell membrane. Its function is as follows. Cell surface proteoglycan that may bear heparan sulfate. May have a role in the organization of cell shape by affecting the actin cytoskeleton, possibly by transferring signals from the cell surface in a sugar-dependent mechanism. The chain is Syndecan-3 (Sdc3) from Rattus norvegicus (Rat).